A 66-amino-acid chain; its full sequence is Photosystem II reaction center protein J (66 aa).

The helical transmembrane segment at 37-57 (LWLVATAGGMAVLFVVGLFFY) threads the bilayer.

It belongs to the PsbJ family. As to quaternary structure, PSII is composed of 1 copy each of membrane proteins PsbA, PsbB, PsbC, PsbD, PsbE, PsbF, PsbH, PsbI, PsbJ, PsbK, PsbL, PsbM, PsbT, PsbX, PsbY, PsbZ, Psb30/Ycf12, peripheral proteins PsbO, CyanoQ (PsbQ), PsbU, PsbV and a large number of cofactors. It forms dimeric complexes.

The protein resides in the cellular thylakoid membrane. In terms of biological role, one of the components of the core complex of photosystem II (PSII). PSII is a light-driven water:plastoquinone oxidoreductase that uses light energy to abstract electrons from H(2)O, generating O(2) and a proton gradient subsequently used for ATP formation. It consists of a core antenna complex that captures photons, and an electron transfer chain that converts photonic excitation into a charge separation. The chain is Photosystem II reaction center protein J from Synechococcus sp. (strain WH7803).